A 475-amino-acid chain; its full sequence is Protein EARLY HEADING DATE 2 (475 aa).

Polar residues predominate over residues 1 to 16 (MLLSDLSSDQEATGSN). The tract at residues 1–26 (MLLSDLSSDQEATGSNSHGGGGGDRM) is disordered. C2H2-type zinc fingers lie at residues 105–127 (FVCEVCNKGFQRDQNLQLHRRGH) and 155–185 (YVCPEPTCVHHDPARALGDLTGIKKHFSRKH). Short sequence motifs (nuclear localization signal) lie at residues 123 to 130 (HRRGHNLP) and 177 to 184 (IKKHFSRK). A C2H2-type 2; degenerate zinc finger spans residues 190–213 (WRCERCGKRYAVHSDWKAHVKNCG). Zn(2+) is bound by residues Cys192, Cys195, His208, Cys212, Cys219, Cys221, His234, and Cys238. The CCHC-type 2; atypical zinc finger occupies 217 to 240 (YRCDCGILFSRKDSLLTHRAFCDA). Residues 227-239 (RKDSLLTHRAFCD) form an SHR-binding region.

In terms of tissue distribution, mostly expressed in developing leaves (more in sheaths than in blades, especially in the outer epidermal cell of immature leaves and in the region immediately beneath the meristem where internodes are visible) and panicles, and, at very low levels, around the shoot apex and in roots.

The protein resides in the nucleus. Its function is as follows. Transcription activator that acts as a flowering master switch in both long and short days, independently of the circadian clock. Promotes flowering upstream of HD1 by up-regulating FTL1, FTL4, FTL5, FTL6, EHD1, HD3A and RFT1. Seems to repress FTL11 expression. May recognize the consensus motif 5'-TTTGTCGTAAT-3' in target gene promoters. The sequence is that of Protein EARLY HEADING DATE 2 from Oryza sativa subsp. japonica (Rice).